The following is an 84-amino-acid chain: UPF0457 protein BT9727_3043 (84 aa).

Belongs to the UPF0457 family.

The protein is UPF0457 protein BT9727_3043 of Bacillus thuringiensis subsp. konkukian (strain 97-27).